Here is a 681-residue protein sequence, read N- to C-terminus: MRKKLFGQLQRIGKALMLPVAILPAAGLLLAIGTAIQGEALQHYLPFIQNGGVQNVAKLMTAAGSIIFENLPMIFALGVAIGLAGGDGVAAIAAFVGYIIMNKTMGDFLQVTPKNVTDPASGYASILGIPTLQTGVFGGIIIGALAAWCYNKFYNINLPSYLGFFAGKRFVPIMMATTSFILAFPMALIWPTIQSGLNAFSTGLLDSNTGVAVFLFGFIKRLLIPFGLHHIFHAPFWFEFGSWKNAAGEIIHGDQRIFIEQIREGAHLTAGKFMQGEFPVMMFGLPAAALAIYHTAKPENKKVVAGLMGSAALTSFLTGITEPLEFSFLFVAPLLFFIHAVLDGLSFLTLYLLDVHLGYTFSGGFIDYVLLGVLPNKTQWWLVIPVGLVYAVIYYFVFRFLIVKLKYKTPGREDKQSQAVTASATELPYAVLEAMGGKANIKHLDACITRLRVEVNDKSKVDVPGLKDLGASGVLEVGNNMQAIFGPKSDQIKHEMQQIMNGQVVENPTTMEDDKDETVVVAEDKSATSELSHIVHAPLTGEVTPLSEVPDQVFSEKMMGDGIAIKPSQGEVRAPFNGKIQMIFPTKHAIGLVSDSGLELLIHIGLDTVKLNGEGFTLHVEEGQEVKQGDLLINFDLDYIRNHAKSDITPIIVTQGNITNLDFKQGEHGNISFGDQLFEAK.

Residues 3–414 (KKLFGQLQRI…LKYKTPGRED (412 aa)) form the PTS EIIC type-1 domain. A run of 10 helical transmembrane segments spans residues 16-36 (LMLP…GTAI), 73-93 (MIFA…AAIA), 126-146 (ILGI…GALA), 170-190 (FVPI…ALIW), 199-219 (AFST…FGFI), 273-293 (FMQG…LAIY), 303-323 (VVAG…ITEP), 328-348 (FLFV…LSFL), 355-375 (VHLG…GVLP), and 383-403 (VIPV…FLIV). Positions 425 to 506 (TELPYAVLEA…QQIMNGQVVE (82 aa)) constitute a PTS EIIB type-1 domain. Cys447 functions as the Phosphocysteine intermediate; for EIIB activity in the catalytic mechanism. Positions 551-655 (DQVFSEKMMG…SDITPIIVTQ (105 aa)) constitute a PTS EIIA type-1 domain. His603 (tele-phosphohistidine intermediate; for EIIA activity) is an active-site residue.

It localises to the cell membrane. It carries out the reaction N(pros)-phospho-L-histidyl-[protein] + D-glucose(out) = D-glucose 6-phosphate(in) + L-histidyl-[protein]. The phosphoenolpyruvate-dependent sugar phosphotransferase system (sugar PTS), a major carbohydrate active transport system, catalyzes the phosphorylation of incoming sugar substrates concomitantly with their translocation across the cell membrane. This system is involved in glucose transport. In Staphylococcus aureus (strain JH9), this protein is PTS system glucose-specific EIICBA component (ptsG).